We begin with the raw amino-acid sequence, 621 residues long: MTVPLIQNPEVLESRLKEIPAEPGVYLMRDATDQILYVGKSKKLRSRVRSYFRFTGDLSPRIQRMVVQVCEIEFIVTDNESEALALEDNLIKTYQPPYNVLLKEDKKYPYLCITWSEPYPQIYITRHRRLNQNQDKYYGPYTDVGLLRYTLGLVKRIFPLRQRPKPLYKDRPCLNYDIGRCPGVCQGLISPEAYRKTVAQVAMIFQGQTDELIRELKEKMAQAAQQENYEAAARYRDQIRGLEQLGQSQKVSLPNSTASRDAIALAMNDSRACIQLFQVRAGKLVGRLGFVAENRGDDPALILQRVLQEHYQYCDPVEIPSEILTQYELPDRDFLESWLSQKKGRKVSLLAPQRQSKAELIELVERNAQLELARSQRLAEREAAALERLAEVLDLPEPPRRLEAYDISHIQGSDAVGSQVVFIDGLPAKQHYRRYKIRNPQVRPGHSDDFASHAEVARRRFSKMTSEDQPDLVLIDGGKGQLAAVMAVLAELGLDHLPVFALAKREEEIFRPGDPEPLRLPPQDPARLLLQRLRDEAHRFALAYHRQQRKLRQQASVLEEIPGLGKQRQKLLMEAFRSLARIQVATEEQLAQVPGIGPKLARQIYRYFHPEAETELPATAE.

Positions 21 to 100 constitute a GIY-YIG domain; it reads AEPGVYLMRD…IKTYQPPYNV (80 aa). Positions 210-245 constitute a UVR domain; that stretch reads DELIRELKEKMAQAAQQENYEAAARYRDQIRGLEQL.

Belongs to the UvrC family. Interacts with UvrB in an incision complex.

Its subcellular location is the cytoplasm. Its function is as follows. The UvrABC repair system catalyzes the recognition and processing of DNA lesions. UvrC both incises the 5' and 3' sides of the lesion. The N-terminal half is responsible for the 3' incision and the C-terminal half is responsible for the 5' incision. In Synechococcus sp. (strain JA-3-3Ab) (Cyanobacteria bacterium Yellowstone A-Prime), this protein is UvrABC system protein C.